The sequence spans 163 residues: uncharacterized protein (163 aa).

Residues 136–161 adopt a coiled-coil conformation; that stretch reads QKYIENHQKEINEHVEKLRTLHKELR.

This is an uncharacterized protein from Acanthamoeba polyphaga (Amoeba).